Reading from the N-terminus, the 549-residue chain is Hydroxylamine reductase (549 aa).

Residues Cys-5, Cys-8, Cys-17, and Cys-23 each contribute to the [4Fe-4S] cluster site. Hybrid [4Fe-2O-2S] cluster contacts are provided by His-244, Glu-268, Cys-312, Cys-403, Cys-431, Cys-456, Glu-491, and Lys-493. Cys-403 carries the cysteine persulfide modification.

This sequence belongs to the HCP family. [4Fe-4S] cluster is required as a cofactor. Hybrid [4Fe-2O-2S] cluster serves as cofactor.

It is found in the cytoplasm. The enzyme catalyses A + NH4(+) + H2O = hydroxylamine + AH2 + H(+). Its function is as follows. Catalyzes the reduction of hydroxylamine to form NH(3) and H(2)O. The protein is Hydroxylamine reductase of Caldanaerobacter subterraneus subsp. tengcongensis (strain DSM 15242 / JCM 11007 / NBRC 100824 / MB4) (Thermoanaerobacter tengcongensis).